The chain runs to 176 residues: MAKAEKVTAVAEIAEQFKSSTATVVTEYRGLSVGKLTELRRALGAEATYSVAKNTLVKRAAAEAGVEGLDDLFVGPTAITFIKGEPVNAAKALKTFAKENKALIIKGGYMDGAALSVAEVEQIADLETREVLLAKLAGALKGNLAKAAGLFNAPASQVARLAAALEEKKRAEGGAE.

Belongs to the universal ribosomal protein uL10 family. As to quaternary structure, part of the ribosomal stalk of the 50S ribosomal subunit. The N-terminus interacts with L11 and the large rRNA to form the base of the stalk. The C-terminus forms an elongated spine to which L12 dimers bind in a sequential fashion forming a multimeric L10(L12)X complex.

In terms of biological role, forms part of the ribosomal stalk, playing a central role in the interaction of the ribosome with GTP-bound translation factors. This is Large ribosomal subunit protein uL10 from Nocardia farcinica (strain IFM 10152).